The following is a 252-amino-acid chain: Protein HEAT-INDUCED TAS1 TARGET 2 (252 aa).

It belongs to the heat induced plant HTT protein family. Expressed ubiquitously, including in seedlings, leaves, stems, inflorescences and siliques.

The protein resides in the cytoplasm. Its subcellular location is the nucleus. Functionally, mediates both basal and acquired thermotolerance via HSFA1s-directed pathways (e.g. HSFA1A, HSFA1B, and HSFA1D). Triggers the expression of HSFA1A and HSFA1B. This Arabidopsis thaliana (Mouse-ear cress) protein is Protein HEAT-INDUCED TAS1 TARGET 2.